The following is a 668-amino-acid chain: Protein-glutamine gamma-glutamyltransferase (668 aa).

The Cytoplasmic segment spans residues Met-1–Arg-6. A helical transmembrane segment spans residues Val-7–Met-27. Topologically, residues Pro-28–Ala-50 are periplasmic. Residues Gly-51–Leu-71 form a helical membrane-spanning segment. Over Ser-72–Gly-74 the chain is Cytoplasmic. The helical transmembrane segment at Ser-75–Val-95 threads the bilayer. The Periplasmic segment spans residues Glu-96–Ala-103. The next 2 membrane-spanning stretches (helical) occupy residues Leu-104–Phe-124 and Leu-125–Gln-145. Residues Gln-146–Arg-158 lie on the Cytoplasmic side of the membrane. The chain crosses the membrane as a helical span at residues Leu-159–Pro-179. The Periplasmic portion of the chain corresponds to Arg-180–Gly-548. Catalysis depends on Cys-404, which acts as the Nucleophile. Catalysis depends on residues His-448 and Asp-464. Residues Leu-549–Pro-569 form a helical membrane-spanning segment. Residues Trp-570 to Ala-668 lie on the Cytoplasmic side of the membrane.

This sequence belongs to the transglutaminase-like superfamily.

It is found in the cell inner membrane. It carries out the reaction L-glutaminyl-[protein] + L-lysyl-[protein] = [protein]-L-lysyl-N(6)-5-L-glutamyl-[protein] + NH4(+). In terms of biological role, displays transglutaminase activity (TGase) in vitro. Plays a critical role in the viability of P.aeruginosa. Might contribute to an essential function linked to the cell wall. In Pseudomonas aeruginosa (strain ATCC 15692 / DSM 22644 / CIP 104116 / JCM 14847 / LMG 12228 / 1C / PRS 101 / PAO1), this protein is Protein-glutamine gamma-glutamyltransferase (tgpA).